Reading from the N-terminus, the 628-residue chain is Leucine-rich repeat and fibronectin type-III domain-containing protein 3 (628 aa).

The first 16 residues, 1 to 16, serve as a signal peptide directing secretion; that stretch reads MAVLPLLLCLLPLAPA. Over 17–540 the chain is Extracellular; it reads SSPPQPASPS…APHAPFLGGT (524 aa). Residues 19–59 form the LRRNT domain; the sequence is PPQPASPSPCPRRCRCQTQSLPLSVLCPGAGLLFVPPSLDR. LRR repeat units follow at residues 60-83, 84-105, 108-129, 132-153, 157-178, 181-202, and 205-226; these read RAAE…ANMT, GLLH…AFSD, ALRA…QLRG, NLRH…ALDD, TLED…ALGR, NVNT…AFSR, and KLAR…PLFS. Residues 249-295 enclose the LRRCT domain; the sequence is NPLHCNCELVWLRRLAREDDLEACASPPALGGRYFWAVGEEEFVCEP. Residues 295–382 form the Ig-like domain; sequence PPVVTHRSPP…GEATAAVELT (88 aa). A disulfide bridge links Cys317 with Cys366. Asn348 and Asn393 each carry an N-linked (GlcNAc...) asparagine glycan. Residues 380-433 are disordered; that stretch reads ELTVGPPPPPQLANSTSCDPPRDGEPDALTPPSAASASASAKAAEAGPPTDRGV. Over residues 410–428 the composition is skewed to low complexity; it reads PPSAASASASAKAAEAGPP. The Fibronectin type-III domain occupies 427–525; sequence PPTDRGVQVT…GCNRFSTEPA (99 aa). The chain crosses the membrane as a helical span at residues 541-561; the sequence is MIIALGGVIVASVLVFIFVLL. At 562-628 the chain is on the cytoplasmic side; it reads MRYKVHGGQP…WGPSHEPMGP (67 aa). The disordered stretch occupies residues 570 to 609; that stretch reads QPPGKTKASAPVSSVCSQTNGALGPMPAPPAPEPSAPRAH. Residues 580–590 are compositionally biased toward polar residues; that stretch reads PVSSVCSQTNG. Residues 595 to 604 are compositionally biased toward pro residues; the sequence is MPAPPAPEPS.

Belongs to the LRFN family. As to quaternary structure, can form heteromeric complexes with LRFN1, LRFN2, LRFN4 and LRFN5. Able to form homomeric complexes across cell junctions, between adjacent cells. Does not interact with DLG4. N-glycosylated.

The protein localises to the cell membrane. Its subcellular location is the cell projection. It localises to the axon. It is found in the dendrite. The protein resides in the synapse. The protein localises to the presynaptic cell membrane. Its subcellular location is the postsynaptic cell membrane. Its function is as follows. Cell adhesion molecule that mediates homophilic cell-cell adhesion in a Ca(2+)-independent manner. Promotes neurite outgrowth in hippocampal neurons. The polypeptide is Leucine-rich repeat and fibronectin type-III domain-containing protein 3 (LRFN3) (Bos taurus (Bovine)).